Reading from the N-terminus, the 410-residue chain is 3-phenylpropionate/cinnamic acid dioxygenase ferredoxin--NAD(+) reductase component (410 aa).

Threonine 5 to aspartate 36 is an FAD binding site. Serine 146–glutamate 184 contacts NAD(+).

This sequence belongs to the bacterial ring-hydroxylating dioxygenase ferredoxin reductase family. In terms of assembly, this dioxygenase system consists of four proteins: the two subunits of the hydroxylase component (HcaE and HcaF), a ferredoxin (HcaC) and a ferredoxin reductase (HcaD). FAD serves as cofactor.

The catalysed reaction is 2 reduced [2Fe-2S]-[ferredoxin] + NAD(+) + H(+) = 2 oxidized [2Fe-2S]-[ferredoxin] + NADH. It participates in aromatic compound metabolism; 3-phenylpropanoate degradation. Functionally, part of the multicomponent 3-phenylpropionate dioxygenase, that converts 3-phenylpropionic acid (PP) and cinnamic acid (CI) into 3-phenylpropionate-dihydrodiol (PP-dihydrodiol) and cinnamic acid-dihydrodiol (CI-dihydrodiol), respectively. The chain is 3-phenylpropionate/cinnamic acid dioxygenase ferredoxin--NAD(+) reductase component from Shigella flexneri serotype 5b (strain 8401).